Here is a 727-residue protein sequence, read N- to C-terminus: 1,4-alpha-glucan branching enzyme GlgB (727 aa).

Catalysis depends on aspartate 405, which acts as the Nucleophile. Residue glutamate 458 is the Proton donor of the active site.

This sequence belongs to the glycosyl hydrolase 13 family. GlgB subfamily. As to quaternary structure, monomer.

It catalyses the reaction Transfers a segment of a (1-&gt;4)-alpha-D-glucan chain to a primary hydroxy group in a similar glucan chain.. It participates in glycan biosynthesis; glycogen biosynthesis. Its function is as follows. Catalyzes the formation of the alpha-1,6-glucosidic linkages in glycogen by scission of a 1,4-alpha-linked oligosaccharide from growing alpha-1,4-glucan chains and the subsequent attachment of the oligosaccharide to the alpha-1,6 position. The sequence is that of 1,4-alpha-glucan branching enzyme GlgB from Yersinia pseudotuberculosis serotype I (strain IP32953).